A 338-amino-acid polypeptide reads, in one-letter code: Ribosomal RNA small subunit methyltransferase C (338 aa).

Belongs to the methyltransferase superfamily. RsmC family. As to quaternary structure, monomer.

The protein localises to the cytoplasm. It carries out the reaction guanosine(1207) in 16S rRNA + S-adenosyl-L-methionine = N(2)-methylguanosine(1207) in 16S rRNA + S-adenosyl-L-homocysteine + H(+). Functionally, specifically methylates the guanine in position 1207 of 16S rRNA in the 30S particle. The chain is Ribosomal RNA small subunit methyltransferase C from Buchnera aphidicola subsp. Acyrthosiphon pisum (strain APS) (Acyrthosiphon pisum symbiotic bacterium).